The following is a 31-amino-acid chain: Small protein MgtS (31 aa).

Topologically, residues 1–4 are periplasmic; the sequence is MLGN. A helical transmembrane segment spans residues 5 to 25; that stretch reads MNVFMAVLGIILFSGFLAAYF. At 26–31 the chain is on the cytoplasmic side; the sequence is SHKWDD.

As to quaternary structure, interacts with MgtA.

The protein resides in the cell inner membrane. Modulates intracellular Mg(2+) levels to maintain cellular integrity upon Mg(2+) limitation. Acts by binding and stabilizing the Mg(2+) transporter MgtA, thereby leading to increased intracellular level of Mg(2+). May inhibit FtsH proteolysis of MgtA. This is Small protein MgtS from Escherichia coli (strain K12).